The sequence spans 367 residues: Epoxide hydrolase 3 (367 aa).

Residues 22–42 (ALVMSLVYLAALVAAFVYSCI) traverse the membrane as a helical segment. Asp180 functions as the Nucleophile in the catalytic mechanism. The Proton donor role is filled by Tyr288. His344 serves as the catalytic Proton acceptor.

It belongs to the AB hydrolase superfamily. Epoxide hydrolase family. In terms of tissue distribution, predominantly expressed in skin, esophagus, lung and tongue and to a lesser extent in pancreas and eye.

It is found in the microsome membrane. The catalysed reaction is an epoxide + H2O = an ethanediol. It carries out the reaction 9,10-epoxyoctadecanoate + H2O = 9,10-dihydroxyoctadecanoate. The enzyme catalyses 9,10-epoxy-(12Z)-octadecenoate + H2O = 9,10-dihydroxy-(12Z)-octadecenoate. It catalyses the reaction 8,9-epoxy-(5Z,11Z,14Z)-eicosatrienoate + H2O = 8,9-dihydroxy-(5Z,11Z,14Z)-eicosatrienoate. The catalysed reaction is 11,12-epoxy-(5Z,8Z,14Z)-eicosatrienoate + H2O = 11,12-dihydroxy-(5Z,8Z,14Z)-eicosatrienoate. It carries out the reaction 14,15-epoxy-(5Z,8Z,11Z)-eicosatrienoate + H2O = 14,15-dihydroxy-(5Z,8Z,11Z)-eicosatrienoate. Its activity is regulated as follows. Inhibited by 1-(1-acetylpiperidin-4-yl)-3-(4-(trifl uoromethoxy)phenyl)urea (TPAU), 1-cyclohexyl-3-dodecylurea (CDU), 12-(3-adamantan-1-yl-ureido)-dodecanoic acid (AUDA), 1-((3S, 5S, 7S)-adamantan-1-yl)-3-(5-(2-(2-ethoxyethoxy) ethoxy)pentyl)urea (AEPU) and to a lesser extent by 8-(3-((3S, 5S, 7S)-adamantan-1-yl)ureido) octanoic acid (AUOA). Functionally, catalyzes the hydrolysis of epoxide-containing fatty acids. Active in vitro against epoxyeicosatrienoic acids (EETs) including 8,9-EET, 9,10-EET, 11,12-EET and 14,15-EET and leukotoxin. The protein is Epoxide hydrolase 3 (Ephx3) of Mus musculus (Mouse).